Consider the following 359-residue polypeptide: MATH domain and coiled-coil domain-containing protein At2g42475 (359 aa).

The MATH domain occupies 6–128; that stretch reads KTSFTFEIEN…NDKLIITVEV (123 aa). Positions 146–337 form a coiled coil; the sequence is EFKELQDLYN…NLELMVLDFK (192 aa).

This Arabidopsis thaliana (Mouse-ear cress) protein is MATH domain and coiled-coil domain-containing protein At2g42475.